The chain runs to 240 residues: UDP-2,3-diacylglucosamine hydrolase (240 aa).

Residues D8, H10, D41, N79, and H114 each coordinate Mn(2+). Residue 79-80 (NR) participates in substrate binding. 5 residues coordinate substrate: D122, S160, N164, K167, and H195. Mn(2+) contacts are provided by H195 and H197.

This sequence belongs to the LpxH family. Mn(2+) serves as cofactor.

The protein resides in the cell inner membrane. The enzyme catalyses UDP-2-N,3-O-bis[(3R)-3-hydroxytetradecanoyl]-alpha-D-glucosamine + H2O = 2-N,3-O-bis[(3R)-3-hydroxytetradecanoyl]-alpha-D-glucosaminyl 1-phosphate + UMP + 2 H(+). It functions in the pathway glycolipid biosynthesis; lipid IV(A) biosynthesis; lipid IV(A) from (3R)-3-hydroxytetradecanoyl-[acyl-carrier-protein] and UDP-N-acetyl-alpha-D-glucosamine: step 4/6. Hydrolyzes the pyrophosphate bond of UDP-2,3-diacylglucosamine to yield 2,3-diacylglucosamine 1-phosphate (lipid X) and UMP by catalyzing the attack of water at the alpha-P atom. Involved in the biosynthesis of lipid A, a phosphorylated glycolipid that anchors the lipopolysaccharide to the outer membrane of the cell. In Shigella sonnei (strain Ss046), this protein is UDP-2,3-diacylglucosamine hydrolase.